The primary structure comprises 782 residues: Shutoff protein (782 aa).

The segment at 262 to 329 (VMNQLLIKRA…AVLVTVELEC (68 aa)) is binding to host EIF4G. Residues 332 to 450 (RFFSDITTLR…SLWTGFDERT (119 aa)) form the RRM domain. Residues tyrosine 349 and tyrosine 665 each carry the phosphotyrosine; by host modification. The disordered stretch occupies residues 715-760 (GGRILGESGRGRGRGLGRMGGGGGGQPRRGSRGGGGRFQGRSDRRQ). Residues 728-752 (RGLGRMGGGGGGQPRRGSRGGGGRF) are compositionally biased toward gly residues.

It belongs to the adenoviridae shutoff protein family. In terms of assembly, monomer. Interacts with hexon protein; this interaction allows chaperoning and trimerization of hexon proteins. Interacts (via N-terminus) with host initiation factor EIF4G (via C-terminus). Interacts (via RRM domain) with viral mRNAs that contain the tripartite leader; this interaction allows ribosome shunting and expression of viral late mRNAs. Post-translationally, might be cleaved by the viral protease. Phosphorylated. Tyrosine phosphorylation enhances preferential binding to tripartite leader mRNAs and allows ribosome shunting. In terms of processing, methylated. Asymmetric dimethylation by host PRMT1 of the Arg/Gly-rich region may regulate shutoff protein binding to hexon and promote the capsid assembly in the nucleus.

The protein localises to the host cytoplasm. Protein that inhibits host translation while promoting late viral translation by ribosome shunting. Blocks host cap-dependent translation by binding to eIF4G, displacing MKNK1 from cap initiation complexes and preventing EIF4E phosphorylation. Binds to the tripartite leader sequence of viral late mRNAs and recruits host eIF4G, PABPC1/poly-A binding protein and 40S ribosomes subunits on viral mRNAs, allowing ribosome shunting and efficient translation of late viral mRNAs even though conventional translation via ribosome scanning from the cap has been shut off in the host cell. During assembly, acts as a chaperone protein that helps hexon proteins assembly into trimers. The protein is Shutoff protein of Human adenovirus A serotype 12 (HAdV-12).